Reading from the N-terminus, the 228-residue chain is 3-dehydroquinate dehydratase (228 aa).

Residues 30–32 and R62 each bind 3-dehydroquinate; that span reads EWR. The active-site Proton donor/acceptor is the H118. The active-site Schiff-base intermediate with substrate is the K143. 3-dehydroquinate is bound by residues R186, S205, and Q209.

This sequence belongs to the type-I 3-dehydroquinase family. Homodimer.

It catalyses the reaction 3-dehydroquinate = 3-dehydroshikimate + H2O. It functions in the pathway metabolic intermediate biosynthesis; chorismate biosynthesis; chorismate from D-erythrose 4-phosphate and phosphoenolpyruvate: step 3/7. Its function is as follows. Involved in the third step of the chorismate pathway, which leads to the biosynthesis of aromatic amino acids. Catalyzes the cis-dehydration of 3-dehydroquinate (DHQ) and introduces the first double bond of the aromatic ring to yield 3-dehydroshikimate. In Streptococcus pyogenes serotype M12 (strain MGAS9429), this protein is 3-dehydroquinate dehydratase.